A 213-amino-acid polypeptide reads, in one-letter code: Probable nicotinate-nucleotide adenylyltransferase (213 aa).

Belongs to the NadD family.

The catalysed reaction is nicotinate beta-D-ribonucleotide + ATP + H(+) = deamido-NAD(+) + diphosphate. The protein operates within cofactor biosynthesis; NAD(+) biosynthesis; deamido-NAD(+) from nicotinate D-ribonucleotide: step 1/1. Its function is as follows. Catalyzes the reversible adenylation of nicotinate mononucleotide (NaMN) to nicotinic acid adenine dinucleotide (NaAD). This is Probable nicotinate-nucleotide adenylyltransferase from Escherichia coli O17:K52:H18 (strain UMN026 / ExPEC).